The following is an 84-amino-acid chain: GTP cyclohydrolase 1 feedback regulatory protein (84 aa).

The protein belongs to the GFRP family. As to quaternary structure, homopentamer. Forms a complex with GCH1 where a GCH1 homodecamer is sandwiched by two GFRP homopentamers.

It localises to the nucleus. The protein resides in the nucleus membrane. It is found in the cytoplasm. Its subcellular location is the cytosol. In terms of biological role, mediates tetrahydrobiopterin inhibition of GTP cyclohydrolase 1. The chain is GTP cyclohydrolase 1 feedback regulatory protein (gchfr) from Xenopus tropicalis (Western clawed frog).